Reading from the N-terminus, the 189-residue chain is UPF0149 protein VF_2102 (189 aa).

The protein belongs to the UPF0149 family.

The polypeptide is UPF0149 protein VF_2102 (Aliivibrio fischeri (strain ATCC 700601 / ES114) (Vibrio fischeri)).